The sequence spans 354 residues: Guanine nucleotide-binding protein G(i) subunit alpha (354 aa).

Residue Gly2 is the site of N-myristoyl glycine attachment. Residue Cys3 is the site of S-palmitoyl cysteine attachment. The 323-residue stretch at 32-354 (REVKLLLLGA…KNNLKDCGLF (323 aa)) folds into the G-alpha domain. Residues 35–48 (KLLLLGAGESGKST) are G1 motif. Residues 40 to 47 (GAGESGKS), 175 to 181 (LRTRVKT), 200 to 204 (DVGGQ), 269 to 272 (NKKD), and Ala326 each bind GTP. Positions 47 and 181 each coordinate Mg(2+). A G2 motif region spans residues 173 to 181 (DVLRTRVKT). The G3 motif stretch occupies residues 196 to 205 (FKMFDVGGQR). The tract at residues 265–272 (ILFLNKKD) is G4 motif. The tract at residues 324–329 (TCATDT) is G5 motif.

The protein belongs to the G-alpha family. G(i/o/t/z) subfamily. As to quaternary structure, g proteins are composed of 3 units; alpha, beta and gamma. The alpha chain contains the guanine nucleotide binding site.

Its function is as follows. Guanine nucleotide-binding proteins (G proteins) are involved as modulators or transducers in various transmembrane signaling systems. This G protein is involved in 1-methyladenine-induced oocyte maturation. In Patiria pectinifera (Starfish), this protein is Guanine nucleotide-binding protein G(i) subunit alpha.